The following is a 486-amino-acid chain: UDP-N-acetylmuramate--L-alanine ligase (486 aa).

126 to 132 (GTHGKTS) provides a ligand contact to ATP.

This sequence belongs to the MurCDEF family.

It localises to the cytoplasm. It catalyses the reaction UDP-N-acetyl-alpha-D-muramate + L-alanine + ATP = UDP-N-acetyl-alpha-D-muramoyl-L-alanine + ADP + phosphate + H(+). The protein operates within cell wall biogenesis; peptidoglycan biosynthesis. Its function is as follows. Cell wall formation. In Corynebacterium glutamicum (strain R), this protein is UDP-N-acetylmuramate--L-alanine ligase.